The primary structure comprises 381 residues: Chymosin (381 aa).

The N-terminal stretch at 1-16 (MRCLVVLLAALALSQA) is a signal peptide. A propeptide spans 17-58 (SGITRIPLHKGKTLRKALKERGLLEDFLQRQQYAVSSKYSSL) (activation peptide). The 305-residue stretch at 74–378 (YFGKIYIGTP…DRANNRVGLA (305 aa)) folds into the Peptidase A1 domain. The active site involves Asp92. An intrachain disulfide couples Cys105 to Cys110. N-linked (GlcNAc...) asparagine glycosylation is present at Asn158. An intrachain disulfide couples Cys265 to Cys269. Asp274 is a catalytic residue. Cys308 and Cys341 are joined by a disulfide. Asn349 carries N-linked (GlcNAc...) asparagine glycosylation.

It belongs to the peptidase A1 family.

It catalyses the reaction Broad specificity similar to that of pepsin A. Clots milk by cleavage of a single 104-Ser-Phe-|-Met-Ala-107 bond in kappa-chain of casein.. Its function is as follows. Chymosin is synthesized in the mucosa of the abomasum (fourth stomach) of young (unweaned) ruminants. The enzyme hydrolyzes casein to paracasein. The chain is Chymosin from Camelus dromedarius (Dromedary).